Reading from the N-terminus, the 362-residue chain is Ferrochelatase (362 aa).

2 residues coordinate Fe cation: His-228 and Glu-309.

This sequence belongs to the ferrochelatase family.

It localises to the cytoplasm. It carries out the reaction heme b + 2 H(+) = protoporphyrin IX + Fe(2+). It functions in the pathway porphyrin-containing compound metabolism; protoheme biosynthesis; protoheme from protoporphyrin-IX: step 1/1. Catalyzes the ferrous insertion into protoporphyrin IX. In Bordetella pertussis (strain Tohama I / ATCC BAA-589 / NCTC 13251), this protein is Ferrochelatase.